The chain runs to 787 residues: MAVWIQAQQLQGDALHQMQALYGQHFPIEVRHYLSQWIESQAWDSIDLDNPQENIKATQLLEGLVQELQKKAEHQVGEDGFLLKIKLGHYATQLQNTYDRCPMELVRCIRHILYNEQRLVREANNGTSPAGSLADAMSQKHLQINQTFEELRPVTQDTENELKKLQQTQEYFIIQYQESLRIQAQFAQLAQLNPQERLSRETALQQKQVTLEAWLQREAQTLQQYRVELAEKHQKTLQLLRKQQTIILDDELIQWKRRQQLAGNGGPPEGSLDVLQSWCEKLAEIIWQNRQQIRRAEHLCQQLPIPGPVEEMLAEVNATITDIISALVTSTFIIEKQPPQVLKTQTKFAATVRLLVGGKLNVHMNPPQVKATIISEQRAKSLLKNESTRNDCSGEILNNCCVMEYHQATGTLSAHFRNMSLKRIKRSDRRGAESVTEEKFTILFESQFSVGGNELVFQVKTLSLPVVVIVHGSQDNNATATVLWDNAFAEPGRVPFAVPDKVLWPQLCEALNMKFKAEVQSNRGLTKENLVFLAQKLFNSSSSHLEDYSGMSVSWSQFNRENLPGRNYTFWQWFDGVMEVLKKHLKPHWNDGAILGFVNKQQAHDLLINKPDGTFLLRFSDSEIGGITIAWKFDSQERMFWNLMPFTTRDFSIRSLADRLGDLNYLIYVFPDRPKDEVYSKYYTPVPCEPATAKAVDGYVKPQIKQVVPEFVSASSDSAGGNATYMDQAPSPAVCPQAHYSIYPQNPDPVLDNDGDFDLDDTMDVARRVEELLGRPMDSQWIPHAQS.

Tyr-90 is modified (phosphotyrosine). Ser-128 carries the post-translational modification Phosphoserine. The 98-residue stretch at 589 to 686 (WNDGAILGFV…EVYSKYYTPV (98 aa)) folds into the SH2 domain. Position 682 is a phosphotyrosine (Tyr-682). Position 699 is a phosphotyrosine; by HCK, JAK and PTK6 (Tyr-699).

This sequence belongs to the transcription factor STAT family. In terms of assembly, upon activation, forms a homodimer or a heterodimer with a related family member. Binds NR3C1. Interacts with NCOA1. Interacts with NMI. Interacts with SOCS7. Interacts (via SH2 domain) with INSR. Interacts with CPEB3; this inhibits STAT5B-mediated transcriptional activation. Tyrosine phosphorylated in response to signaling via activated KIT, resulting in translocation to the nucleus. Tyrosine phosphorylated in response to signaling via activated FLT3; wild-type FLT3 results in much weaker phosphorylation than constitutively activated mutant FLT3. Alternatively, can be phosphorylated by JAK2. Phosphorylation at Tyr-699 by PTK6 or HCK leads to an increase of its transcriptional activity.

The protein resides in the cytoplasm. Its subcellular location is the nucleus. Functionally, carries out a dual function: signal transduction and activation of transcription. Mediates cellular responses to the cytokine KITLG/SCF and other growth factors. Binds to the GAS element and activates PRL-induced transcription. Positively regulates hematopoietic/erythroid differentiation. This is Signal transducer and activator of transcription 5B (STAT5B) from Sus scrofa (Pig).